A 695-amino-acid chain; its full sequence is Centrosomal protein kizuna (695 aa).

Residues 1–12 (MPRGRGGGGGGL) are compositionally biased toward gly residues. Positions 1-24 (MPRGRGGGGGGLRQASATSAPLAS) are disordered. The segment covering 15–24 (ASATSAPLAS) has biased composition (low complexity). 2 coiled-coil regions span residues 29-57 (ERVGQLQQALRDSEKKRLDLEDKLYEYNK) and 102-132 (VEHLTTNTEKLQKLKTEYEAEVKRMRLLSKD). Disordered regions lie at residues 261-313 (EIGS…SDRE), 351-391 (HSAW…SDLT), 444-465 (QSFPDSKREPSPDSPRQPEKVP), and 633-695 (SEAS…FYDT). Composition is skewed to polar residues over residues 263 to 274 (GSSTQHSKSNLS) and 282 to 297 (LHSSLQERLSPENSIT). 2 stretches are compositionally biased toward basic and acidic residues: residues 299-313 (LKCDSSSRSEGSDRE) and 360-377 (DLDHGDSKSQKAVLKHEE). The segment covering 382-391 (GSSCSSSDLT) has biased composition (low complexity). T391 is subject to Phosphothreonine; by PLK1. The segment covering 448–465 (DSKREPSPDSPRQPEKVP) has biased composition (basic and acidic residues). Low complexity predominate over residues 633–645 (SEASFSSSEGSPL). S667, S670, and S672 each carry phosphoserine. The segment covering 676-686 (AALRPRDHDMP) has biased composition (basic and acidic residues).

It belongs to the kizuna family. In terms of assembly, interacts with AKAP9, CEP72, ODF2, PCNT and TUBGCP2. Post-translationally, phosphorylation at Thr-391 by PLK1 is not needed for centrosomal localization or pericentriolar material expansion but is indispensable for spindle-pole stabilization.

Its subcellular location is the cytoplasm. It is found in the cytoskeleton. It localises to the microtubule organizing center. The protein localises to the centrosome. The protein resides in the cilium basal body. Its function is as follows. Centrosomal protein required for establishing a robust mitotic centrosome architecture that can endure the forces that converge on the centrosomes during spindle formation. Required for stabilizing the expanded pericentriolar material around the centriole. This Mus musculus (Mouse) protein is Centrosomal protein kizuna (Kiz).